A 139-amino-acid polypeptide reads, in one-letter code: Putative pre-16S rRNA nuclease (139 aa).

The protein belongs to the YqgF nuclease family.

It is found in the cytoplasm. Its function is as follows. Could be a nuclease involved in processing of the 5'-end of pre-16S rRNA. This chain is Putative pre-16S rRNA nuclease, found in Bacillus licheniformis (strain ATCC 14580 / DSM 13 / JCM 2505 / CCUG 7422 / NBRC 12200 / NCIMB 9375 / NCTC 10341 / NRRL NRS-1264 / Gibson 46).